The primary structure comprises 633 residues: tRNA uridine 5-carboxymethylaminomethyl modification enzyme MnmG (633 aa).

FAD-binding positions include 15–20 (GAGHAG), Val127, and Ser182. 276 to 290 (GPRYCPSIEDKIVRF) lines the NAD(+) pocket. An FAD-binding site is contributed by Gln373.

This sequence belongs to the MnmG family. As to quaternary structure, homodimer. Heterotetramer of two MnmE and two MnmG subunits. The cofactor is FAD.

It is found in the cytoplasm. Functionally, NAD-binding protein involved in the addition of a carboxymethylaminomethyl (cmnm) group at the wobble position (U34) of certain tRNAs, forming tRNA-cmnm(5)s(2)U34. This Streptococcus thermophilus (strain CNRZ 1066) protein is tRNA uridine 5-carboxymethylaminomethyl modification enzyme MnmG.